Consider the following 33-residue polypeptide: Protamine-2C (33 aa).

Residues 1–33 (MPRRRRSSRRPVRRRRRPRVSRRRRRRGGRRRR) form a disordered region.

In terms of tissue distribution, testis.

The protein localises to the nucleus. The protein resides in the chromosome. In terms of biological role, protamines substitute for histones in the chromatin of sperm during the haploid phase of spermatogenesis. They compact sperm DNA into a highly condensed, stable and inactive complex. The protein is Protamine-2C of Oncorhynchus mykiss (Rainbow trout).